Here is a 227-residue protein sequence, read N- to C-terminus: Cytidylate kinase (227 aa).

12 to 20 contacts ATP; that stretch reads GPGGAGKGT.

This sequence belongs to the cytidylate kinase family. Type 1 subfamily.

It is found in the cytoplasm. It carries out the reaction CMP + ATP = CDP + ADP. The enzyme catalyses dCMP + ATP = dCDP + ADP. In Klebsiella pneumoniae (strain 342), this protein is Cytidylate kinase.